The primary structure comprises 225 residues: 3-demethoxyubiquinol 3-hydroxylase (225 aa).

Residues 1–11 are compositionally biased toward polar residues; the sequence is MSVASTSSGFT. Residues 1–20 form a disordered region; it reads MSVASTSSGFTPFSRRRGPL. Residues E74, E104, H107, E156, E188, and H191 each contribute to the Fe cation site. Positions 181–203 are disordered; that stretch reads VSQMKDDEAQHRASAERAGGVPL. Residues 184–195 show a composition bias toward basic and acidic residues; that stretch reads MKDDEAQHRASA.

The protein belongs to the COQ7 family. Requires Fe cation as cofactor.

The protein resides in the cell membrane. It catalyses the reaction a 5-methoxy-2-methyl-3-(all-trans-polyprenyl)benzene-1,4-diol + AH2 + O2 = a 3-demethylubiquinol + A + H2O. It participates in cofactor biosynthesis; ubiquinone biosynthesis. Functionally, catalyzes the hydroxylation of 2-nonaprenyl-3-methyl-6-methoxy-1,4-benzoquinol during ubiquinone biosynthesis. The chain is 3-demethoxyubiquinol 3-hydroxylase from Bordetella petrii (strain ATCC BAA-461 / DSM 12804 / CCUG 43448).